The following is a 211-amino-acid chain: 5-formyltetrahydrofolate cyclo-ligase (211 aa).

4–8 contributes to the ATP binding site; that stretch reads KQLLR. Substrate-binding positions include Glu-56 and 152 to 156; that span reads HGAGY. ATP is bound by residues 151–158 and Asp-194; that span reads GHGAGYYD.

It belongs to the 5-formyltetrahydrofolate cyclo-ligase family. In terms of processing, N-glycosylated.

The protein resides in the mitochondrion. The catalysed reaction is (6S)-5-formyl-5,6,7,8-tetrahydrofolate + ATP = (6R)-5,10-methenyltetrahydrofolate + ADP + phosphate. Only enzyme known to utilize 5-formyltetrahydrofolate (folinic acid) as substrate. Contributes to tetrahydrofolate metabolism in an alternative way of folate biosynthesis. May regulate carbon flow through the folate-dependent one-carbon metabolic network that supplies carbon for the biosynthesis of purines, thymidine and amino acids. This chain is 5-formyltetrahydrofolate cyclo-ligase (FAU1), found in Saccharomyces cerevisiae (strain ATCC 204508 / S288c) (Baker's yeast).